A 245-amino-acid chain; its full sequence is 8-amino-3,8-dideoxy-manno-octulosonate cytidylyltransferase (245 aa).

It belongs to the KdsB family.

The protein localises to the cytoplasm. The catalysed reaction is 8-amino-3,8-dideoxy-alpha-D-manno-octulosonate + CTP = CMP-8-amino-3,8-dideoxy-alpha-D-manno-oct-2-ulosonate + diphosphate. It participates in bacterial outer membrane biogenesis; lipopolysaccharide biosynthesis. Activates KDO8N (a required 8-carbon sugar) for incorporation into bacterial lipopolysaccharide in the Shewanella genus. This Shewanella oneidensis (strain ATCC 700550 / JCM 31522 / CIP 106686 / LMG 19005 / NCIMB 14063 / MR-1) protein is 8-amino-3,8-dideoxy-manno-octulosonate cytidylyltransferase.